The following is a 151-amino-acid chain: SsrA-binding protein (151 aa).

This sequence belongs to the SmpB family.

Its subcellular location is the cytoplasm. Required for rescue of stalled ribosomes mediated by trans-translation. Binds to transfer-messenger RNA (tmRNA), required for stable association of tmRNA with ribosomes. tmRNA and SmpB together mimic tRNA shape, replacing the anticodon stem-loop with SmpB. tmRNA is encoded by the ssrA gene; the 2 termini fold to resemble tRNA(Ala) and it encodes a 'tag peptide', a short internal open reading frame. During trans-translation Ala-aminoacylated tmRNA acts like a tRNA, entering the A-site of stalled ribosomes, displacing the stalled mRNA. The ribosome then switches to translate the ORF on the tmRNA; the nascent peptide is terminated with the 'tag peptide' encoded by the tmRNA and targeted for degradation. The ribosome is freed to recommence translation, which seems to be the essential function of trans-translation. This chain is SsrA-binding protein, found in Chlamydia trachomatis serovar A (strain ATCC VR-571B / DSM 19440 / HAR-13).